Here is a 435-residue protein sequence, read N- to C-terminus: Methylenetetrahydrofolate--tRNA-(uracil-5-)-methyltransferase TrmFO (435 aa).

9–14 (GAGLAG) contributes to the FAD binding site.

The protein belongs to the MnmG family. TrmFO subfamily. Requires FAD as cofactor.

It localises to the cytoplasm. It carries out the reaction uridine(54) in tRNA + (6R)-5,10-methylene-5,6,7,8-tetrahydrofolate + NADH + H(+) = 5-methyluridine(54) in tRNA + (6S)-5,6,7,8-tetrahydrofolate + NAD(+). It catalyses the reaction uridine(54) in tRNA + (6R)-5,10-methylene-5,6,7,8-tetrahydrofolate + NADPH + H(+) = 5-methyluridine(54) in tRNA + (6S)-5,6,7,8-tetrahydrofolate + NADP(+). Its function is as follows. Catalyzes the folate-dependent formation of 5-methyl-uridine at position 54 (M-5-U54) in all tRNAs. In Staphylococcus aureus (strain JH1), this protein is Methylenetetrahydrofolate--tRNA-(uracil-5-)-methyltransferase TrmFO.